We begin with the raw amino-acid sequence, 207 residues long: dTTP/UTP pyrophosphatase (207 aa).

Aspartate 86 serves as the catalytic Proton acceptor.

The protein belongs to the Maf family. YhdE subfamily. A divalent metal cation serves as cofactor.

Its subcellular location is the cytoplasm. The enzyme catalyses dTTP + H2O = dTMP + diphosphate + H(+). The catalysed reaction is UTP + H2O = UMP + diphosphate + H(+). In terms of biological role, nucleoside triphosphate pyrophosphatase that hydrolyzes dTTP and UTP. May have a dual role in cell division arrest and in preventing the incorporation of modified nucleotides into cellular nucleic acids. This is dTTP/UTP pyrophosphatase from Nitrosospira multiformis (strain ATCC 25196 / NCIMB 11849 / C 71).